A 503-amino-acid chain; its full sequence is Intracellular exo-alpha-(1-&gt;5)-L-arabinofuranosidase (503 aa).

Alpha-L-arabinofuranose contacts are provided by glutamate 27, asparagine 72, and asparagine 172. Glutamate 173 serves as the catalytic Proton donor/acceptor. Alpha-L-arabinofuranose is bound by residues tyrosine 244, glutamate 292, and glutamine 352. Glutamate 292 (nucleophile) is an active-site residue.

This sequence belongs to the glycosyl hydrolase 51 family. In terms of assembly, homohexamer; trimer of dimers.

Its subcellular location is the cytoplasm. The catalysed reaction is Hydrolysis of terminal non-reducing alpha-L-arabinofuranoside residues in alpha-L-arabinosides.. Its pathway is glycan metabolism; L-arabinan degradation. Its function is as follows. Involved in the degradation of arabinan and is a key enzyme in the complete degradation of the plant cell wall. Catalyzes the cleavage of terminal alpha-(1-&gt;5)-arabinofuranosyl bonds in small oligosaccharides as alpha-(1-&gt;5)-linked arabinobiose/arabinotriose, but does not display significant activity against linear non-substituted arabinan. It is also highly efficient in the cleavage of alpha-(1-&gt;3)-linked arabinoside of xylobiose and of the alpha-(1-&gt;3)-linked arabinoside decorations of polymeric wheat arabinoxylan. It exhibits very low activity against sugar beet arabinan. The chain is Intracellular exo-alpha-(1-&gt;5)-L-arabinofuranosidase from Acetivibrio thermocellus (strain ATCC 27405 / DSM 1237 / JCM 9322 / NBRC 103400 / NCIMB 10682 / NRRL B-4536 / VPI 7372) (Clostridium thermocellum).